Consider the following 647-residue polypeptide: Leucine aminopeptidase 2 (647 aa).

Residues 169 to 171 (QCQ) and 295 to 300 (PYGGME) each bind substrate. A Zn(2+)-binding site is contributed by histidine 324. Glutamate 325 acts as the Proton acceptor in catalysis. Residues histidine 328 and glutamate 347 each contribute to the Zn(2+) site. Tyrosine 418 (proton donor) is an active-site residue.

Belongs to the peptidase M1 family. It depends on Zn(2+) as a cofactor.

It is found in the cytoplasm. It localises to the nucleus. The enzyme catalyses an epoxide + H2O = an ethanediol. In terms of biological role, aminopeptidase that preferentially cleaves di- and tripeptides. Also has low epoxide hydrolase activity (in vitro). Can hydrolyze the epoxide leukotriene LTA(4) but it forms preferentially 5,6-dihydroxy-7,9,11,14-eicosatetraenoic acid rather than the cytokine leukotriene B(4) as the product compared to the homologous mammalian enzyme (in vitro). This is Leucine aminopeptidase 2 from Yarrowia lipolytica (strain CLIB 122 / E 150) (Yeast).